The sequence spans 438 residues: Histidinol dehydrogenase (438 aa).

3 residues coordinate NAD(+): Tyr-137, Gln-198, and Asn-221. Substrate contacts are provided by Ser-244, Gln-266, and His-269. Residues Gln-266 and His-269 each contribute to the Zn(2+) site. Active-site proton acceptor residues include Glu-334 and His-335. His-335, Asp-368, Glu-422, and His-427 together coordinate substrate. Residue Asp-368 participates in Zn(2+) binding. His-427 lines the Zn(2+) pocket.

This sequence belongs to the histidinol dehydrogenase family. Requires Zn(2+) as cofactor.

It catalyses the reaction L-histidinol + 2 NAD(+) + H2O = L-histidine + 2 NADH + 3 H(+). Its pathway is amino-acid biosynthesis; L-histidine biosynthesis; L-histidine from 5-phospho-alpha-D-ribose 1-diphosphate: step 9/9. Its function is as follows. Catalyzes the sequential NAD-dependent oxidations of L-histidinol to L-histidinaldehyde and then to L-histidine. This Aromatoleum aromaticum (strain DSM 19018 / LMG 30748 / EbN1) (Azoarcus sp. (strain EbN1)) protein is Histidinol dehydrogenase.